The sequence spans 395 residues: Zinc finger protein 385D (395 aa).

Matrin-type zinc fingers lie at residues isoleucine 80–alanine 110, leucine 204–alanine 234, and phenylalanine 267–glycine 297. Residues leucine 282–asparagine 308 are disordered.

It localises to the nucleus. The sequence is that of Zinc finger protein 385D (Znf385d) from Rattus norvegicus (Rat).